Reading from the N-terminus, the 581-residue chain is Protein alan shepard (581 aa).

Pro residues predominate over residues 1 to 10 (MHPRYSPAPP). The segment at 1 to 73 (MHPRYSPAPP…AVTAAPPTPR (73 aa)) is disordered. Phosphotyrosine is present on Tyr5. A compositionally biased stretch (polar residues) spans 35 to 54 (ANNSQQLPPQMPRSQNYANG). The segment covering 55–68 (SSSSAAAASAVTAA) has biased composition (low complexity). Phosphotyrosine is present on residues Tyr128 and Tyr146. The segment covering 168–226 (PATTTYGQRVPTAASPSNTNSSSSSNTGSQSGTLSTSLSHTTNTNTNMGPNGTAQNQNQ) has biased composition (low complexity). Residues 168–234 (PATTTYGQRV…NQQGGGGEQL (67 aa)) form a disordered region. 2 RRM domains span residues 237 to 310 (TNLY…MAKQ) and 316 to 395 (TNLY…FADG). The tract at residues 555-581 (MTDSEQASTAASPDEAYTQYPHQAAPK) is disordered.

In terms of biological role, has a role in the perception of gravity. The sequence is that of Protein alan shepard from Drosophila willistoni (Fruit fly).